The sequence spans 138 residues: Putative pre-16S rRNA nuclease (138 aa).

Belongs to the YqgF nuclease family.

It localises to the cytoplasm. In terms of biological role, could be a nuclease involved in processing of the 5'-end of pre-16S rRNA. In Escherichia fergusonii (strain ATCC 35469 / DSM 13698 / CCUG 18766 / IAM 14443 / JCM 21226 / LMG 7866 / NBRC 102419 / NCTC 12128 / CDC 0568-73), this protein is Putative pre-16S rRNA nuclease.